The primary structure comprises 350 residues: D-guloside 3-dehydrogenase (350 aa).

The protein belongs to the zinc-containing alcohol dehydrogenase family. Zn(2+) is required as a cofactor.

The enzyme catalyses a D-guloside + NAD(+) = a 3-dehydro-D-guloside + NADH + H(+). Its function is as follows. Catalyzes the NAD(+)-dependent oxidation of the hydroxyl group at C3 of D-gulosides leading to 3-dehydro-D-gulosides. Probably functions in a metabolic pathway that transforms D-gulosides to D-glucosides. Is also able to catalyze the reverse reactions, i.e. the NADH-dependent reduction of the oxo group at C3 of 3-dehydro-D-gulosides leading to D-gulosides. In vitro, can oxidize D-gulose and methyl beta-D-guloside, and reduce methyl alpha-3-dehydro-D-guloside and methyl beta-3-dehydro-D-guloside. However, the actual specific physiological substrates for this metabolic pathway are unknown. This Shigella flexneri protein is D-guloside 3-dehydrogenase (ycjQ).